A 319-amino-acid chain; its full sequence is ATP-dependent 6-phosphofructokinase (319 aa).

Residue glycine 11 coordinates ATP. 21–25 (RAVVR) is an ADP binding site. ATP is bound by residues 72–73 (RC) and 102–105 (GEGS). Position 103 (glutamate 103) interacts with Mg(2+). 126 to 128 (TID) serves as a coordination point for substrate. Residue aspartate 128 is the Proton acceptor of the active site. Lysine 155 serves as a coordination point for ADP. Residues arginine 163 and 170–172 (MGR) each bind substrate. Residues 186–188 (GAE), arginine 212, and 214–216 (KIN) contribute to the ADP site. Substrate is bound by residues glutamate 223, arginine 244, and 250-253 (HVQR).

The protein belongs to the phosphofructokinase type A (PFKA) family. ATP-dependent PFK group I subfamily. Prokaryotic clade 'B1' sub-subfamily. As to quaternary structure, homotetramer. Mg(2+) serves as cofactor.

The protein resides in the cytoplasm. It carries out the reaction beta-D-fructose 6-phosphate + ATP = beta-D-fructose 1,6-bisphosphate + ADP + H(+). It participates in carbohydrate degradation; glycolysis; D-glyceraldehyde 3-phosphate and glycerone phosphate from D-glucose: step 3/4. Its activity is regulated as follows. Allosterically activated by ADP and other diphosphonucleosides, and allosterically inhibited by phosphoenolpyruvate. Functionally, catalyzes the phosphorylation of D-fructose 6-phosphate to fructose 1,6-bisphosphate by ATP, the first committing step of glycolysis. This chain is ATP-dependent 6-phosphofructokinase, found in Thermotoga petrophila (strain ATCC BAA-488 / DSM 13995 / JCM 10881 / RKU-1).